Here is a 276-residue protein sequence, read N- to C-terminus: MTVVGELDPQKLTALVATAAEILDAASVPFVAGHRADSAVRKQGNDFATEVDLAIERQVVRALTEATGIGVHGEEFGGEPIDSPLVWVLDPIDGTFNYAAGSPMAAILLGLLADGEPVAGLTWLPFTGEKYSALVGGPLYSDGKPCPPLGSPTLADSIIGIQTFNIDSRGRFPGRYRVEVLANLSRVCSRVRMHGATGVDLAYVAAGILGGAISFGHHIWDHAAGVALVRAAGGVVTDLTGAPWTVDSKSVLAAAPGVHEKMLEIVKSTGKPEDYL.

Mg(2+) contacts are provided by E74, D90, I92, and D93. A substrate-binding site is contributed by E74. Substrate contacts are provided by residues 92–95, R192, and D221; that span reads IDGT. Residue D221 participates in Mg(2+) binding.

This sequence belongs to the inositol monophosphatase superfamily. It depends on Mg(2+) as a cofactor.

It catalyses the reaction a myo-inositol phosphate + H2O = myo-inositol + phosphate. It functions in the pathway polyol metabolism; myo-inositol biosynthesis; myo-inositol from D-glucose 6-phosphate: step 2/2. Functionally, catalyzes the dephosphorylation of inositol 1-phosphate (I-1-P) to yield free myo-inositol, a key metabolite in mycobacteria. This is Inositol-1-monophosphatase ImpA (impA) from Mycolicibacterium smegmatis (strain ATCC 700084 / mc(2)155) (Mycobacterium smegmatis).